The sequence spans 979 residues: MSVCTLSVPVSSLSPGRRCNTFSDSGILGCVPINSNTDEEDVVEEKMVAEGVNKEAKQPAKKKRKKGLRIKGKRRRKKLILAKKFSKDLGSGRPVADAPALLASNDPEQDEESLFESNIEKQIYLPSTRAKTSIVWHFFHVDPQYTWRAICNLCEKSVSRGKPGSHLGTSTLQRHLQARHSPHWTRANKFGVASGEEDFTLDVSLSPSSGSNGSFEYIPTDPLDDNRMGKKHDKSASDALRAERGRFLIKSNIVKHALIPGTRAKTSAVWNFFYTDPQHISRAVCNICKRSVSRGRPGSHLGTSTLQRHLQATHPIHWAVANKDSGAVANGLDEAETERSDLLSDTLHGEKSTGSQDLTAEDLSDSDSDEPMLEVENRSESPIPVAEQGTLMRAQERETTCCGNPVSSHISQAIIQMIVEDMHPYNYFSTPAFQRFMQIVAPDYRLPSETYFFTKAVPQLYDCVREKIFLTLENVQSQKIHLTVDIWTHDPSTDYFIVTVHWVSLETASFLNNGRIPDFRKWAVLCVTGLAKDCLITNILQELNDQIGLWLSPNFLIPSFIVSDNSSNVVHAIKDGGFTHVPCFLHCLNMVIQDFFCEHKSIENMLVAARKTCHHFSHSVKARQILQEFQNDHQLPWKNLKQDETGHWISTFYMLKWLLEHCYSVHHSLGRASGVVLTSLQWTLMTYVCDILKPFEEATQKVSVKTAGLNQVLPLIHHLLLSLQKLREDFQVRGITQALNLVDSLSLKLETDTLLSAMLKSKPCILATLLDPCFKNSLEDFFPQGADLETYKQFLAEEVCNYMESSPEICQIPTSEASCPSVTVGADSFTSSLKEGTSSSGSVDSSAVDNVALGSKSFMFPSAVAVVDEYFKEKYSEFSGGDDPLIYWQRKISIWPALTQVAIQYLSCPMCSWQSECIFTKNSHFHPKQIMSLDFDNIEQLMFLKMNLKNVNYDYSTLVLSWDPEQNEVVQSSEKEILP.

The interval 1–89 (MSVCTLSVPV…ILAKKFSKDL (89 aa)) is required for nucleolar localization. A BED-type 1 zinc finger spans residues 130-187 (AKTSIVWHFFHVDPQYTWRAICNLCEKSVSRGKPGSHLGTSTLQRHLQARHSPHWTRA). Zn(2+) is bound by residues C151, C154, H175, and H180. The tract at residues 207–232 (PSSGSNGSFEYIPTDPLDDNRMGKKH) is disordered. The segment at 264–321 (AKTSAVWNFFYTDPQHISRAVCNICKRSVSRGRPGSHLGTSTLQRHLQATHPIHWAVA) adopts a BED-type 2 zinc-finger fold. C285, C288, H309, and H314 together coordinate Zn(2+). The segment at 333-383 (DEAETERSDLLSDTLHGEKSTGSQDLTAEDLSDSDSDEPMLEVENRSESPI) is disordered. A compositionally biased stretch (basic and acidic residues) spans 337–351 (TERSDLLSDTLHGEK). A compositionally biased stretch (acidic residues) spans 359-373 (TAEDLSDSDSDEPML). S381 carries the post-translational modification Phosphoserine. The tract at residues 866-948 (VVDEYFKEKY…EQLMFLKMNL (83 aa)) is HATC (Hobo-Ac-Tam3) domain.

In terms of tissue distribution, expressed in pancreatic islet cells (at protein level).

The protein resides in the nucleus. It localises to the nucleolus. The protein localises to the cytoplasm. Functionally, transcriptional repressor which binds to the consensus sequence 5'-GCTCGC-3', transcription regulation may be tissue-specific. Regulates the expression of target genes such as: IGF2, PGAP6/TMEM8, ENHO, and PIANP. Acts as a transcriptional repressor of growth factor IGF2, thereby negatively regulating postnatal growth of muscles and internal organs, especially in females. Negatively regulates myoblast differentiation and myoblast mitochondrial activity via its regulation of IGF2 transcription. Negatively regulates the cell cycle of myoblasts, potentially via transcriptional regulation of the E2F family of transcription factors such as: E2F1 and E2F2. Positively regulates the cell cycle and survival of pancreatic beta cells. Binds to the CDH2 gene and may directly repress CDH2 transcription. Probably by controlling CDH2 expression, regulates pancreatic beta cell adhesion, and formation of cell-to-cell junctions between pancreatic beta cells and neural crest stem cells. May also play a role in embryonic beta cell differentiation. May play a role in insulin sensitivity and glucose clearance. This Homo sapiens (Human) protein is Zinc finger BED domain-containing protein 6.